Consider the following 201-residue polypeptide: Lipopolysaccharide core heptose(II)-phosphate phosphatase (201 aa).

The first 35 residues, 1-35, serve as a signal peptide directing secretion; the sequence is MLAFILRFIKNKSYFALLAGAWVIIAGLTSQHAWS.

It belongs to the phosphoglycerate mutase family. Ais subfamily.

The protein localises to the periplasm. It participates in bacterial outer membrane biogenesis; lipopolysaccharide metabolism. Catalyzes the dephosphorylation of heptose(II) of the outer membrane lipopolysaccharide core. The chain is Lipopolysaccharide core heptose(II)-phosphate phosphatase from Salmonella arizonae (strain ATCC BAA-731 / CDC346-86 / RSK2980).